The following is a 156-amino-acid chain: Peptidyl-prolyl cis-trans isomerase H (156 aa).

In terms of domain architecture, PPIase cyclophilin-type spans 1–155; the sequence is TPAGRLKCEL…MAVRITQCGE (155 aa).

This sequence belongs to the cyclophilin-type PPIase family. PPIase H subfamily.

The protein localises to the nucleus. It carries out the reaction [protein]-peptidylproline (omega=180) = [protein]-peptidylproline (omega=0). Functionally, PPIases accelerate the folding of proteins. It catalyzes the cis-trans isomerization of proline imidic peptide bonds in oligopeptides. In Mycosarcoma maydis (Corn smut fungus), this protein is Peptidyl-prolyl cis-trans isomerase H (CYP3).